A 613-amino-acid chain; its full sequence is Putative lipase atg15 (613 aa).

Over Met-1–Thr-20 the chain is Cytoplasmic. A helical; Signal-anchor for type II membrane protein transmembrane segment spans residues Leu-21–Ser-43. Residues Arg-44–Pro-613 lie on the Lumenal side of the membrane. Asn-202, Asn-224, Asn-282, and Asn-306 each carry an N-linked (GlcNAc...) asparagine glycan. Ser-322 serves as the catalytic Charge relay system. Asn-468 carries an N-linked (GlcNAc...) asparagine glycan. The disordered stretch occupies residues His-472 to Ser-492. Over residues Thr-473 to Ser-492 the composition is skewed to low complexity.

It belongs to the AB hydrolase superfamily. Lipase family. Binds to both phosphatidylinositol (PI) and phosphatidylinositol 3,5-bisphosphate (PIP2).

The protein localises to the endosome. It localises to the multivesicular body membrane. It is found in the prevacuolar compartment membrane. The catalysed reaction is a triacylglycerol + H2O = a diacylglycerol + a fatty acid + H(+). Its function is as follows. Lipase which is essential for lysis of subvacuolar cytoplasm to vacuole targeted bodies and intravacuolar autophagic bodies. Involved in the lysis of intravacuolar multivesicular body (MVB) vesicles. The intravacuolar membrane disintegration by atg15 is critical to life span extension. The polypeptide is Putative lipase atg15 (atg15) (Aspergillus terreus (strain NIH 2624 / FGSC A1156)).